The chain runs to 297 residues: Protease HtpX homolog (297 aa).

2 helical membrane-spanning segments follow: residues 14–34 (IVLL…VGYL) and 38–58 (SLET…IIMV). Histidine 144 serves as a coordination point for Zn(2+). Glutamate 145 is an active-site residue. Position 148 (histidine 148) interacts with Zn(2+). Helical transmembrane passes span 159–179 (IALA…NWWF) and 199–219 (ILLL…AAAI). Glutamate 228 is a binding site for Zn(2+).

It belongs to the peptidase M48B family. Zn(2+) is required as a cofactor.

The protein localises to the cell membrane. This is Protease HtpX homolog from Leuconostoc mesenteroides subsp. mesenteroides (strain ATCC 8293 / DSM 20343 / BCRC 11652 / CCM 1803 / JCM 6124 / NCDO 523 / NBRC 100496 / NCIMB 8023 / NCTC 12954 / NRRL B-1118 / 37Y).